Reading from the N-terminus, the 625-residue chain is Prothrombin (625 aa).

Residues 1–24 (MARVRGPRLPGCLALAALFSLVHS) form the signal peptide. A propeptide spanning residues 25-43 (QHVFLAHQQASSLLQRARR) is cleaved from the precursor. A Gla domain is found at 44-90 (ANKGFLEEVRKGNLERECLEEPCSREEAFEALESLSATDAFWAKYTA). A 4-carboxyglutamate mark is found at Glu-50, Glu-51, Glu-58, Glu-60, Glu-63, Glu-64, Glu-69, Glu-70, Glu-73, and Glu-76. A disulfide bridge links Cys-61 with Cys-66. Disulfide bonds link Cys-91–Cys-104, Cys-109–Cys-187, Cys-130–Cys-170, Cys-158–Cys-182, Cys-214–Cys-292, Cys-235–Cys-275, Cys-263–Cys-287, Cys-339–Cys-485, Cys-394–Cys-410, Cys-539–Cys-553, and Cys-567–Cys-597. 2 Kringle domains span residues 109–187 (CAEG…VPVC) and 214–292 (CVPD…LNYC). 2 N-linked (GlcNAc...) asparagine glycosylation sites follow: Asn-120 and Asn-144. The region spanning 367–621 (IVEGQDAEVG…LKKWIQKVID (255 aa)) is the Peptidase S1 domain. Catalysis depends on His-409, which acts as the Charge relay system. N-linked (GlcNAc...) asparagine glycosylation occurs at Asn-419. The Charge relay system role is filled by Asp-465. Positions 554 to 576 (AGYKPGEGKRGDACEGDSGGPFV) are high affinity receptor-binding region which is also known as the TP508 peptide. The active-site Charge relay system is the Ser-571.

This sequence belongs to the peptidase S1 family. As to quaternary structure, heterodimer (named alpha-thrombin) of a light and a heavy chain; disulfide-linked. Forms a heterodimer with SERPINA5. In plasma, interacts (via N-terminus) with alpha-1-microglobulin; this interaction does not prevent the activation of prothrombin to thrombin. The gamma-carboxyglutamyl residues, which bind calcium ions, result from the carboxylation of glutamyl residues by a microsomal enzyme, the vitamin K-dependent carboxylase. The modified residues are necessary for the calcium-dependent interaction with a negatively charged phospholipid surface, which is essential for the conversion of prothrombin to thrombin. Post-translationally, in the penultimate step of the coagulation cascade, prothrombin is converted to thrombin by the prothrombinase complex composed of factor Xa (F10), cofactor Va (F5), and phospholipids. This activation requires factor Xa-catalyzed sequential cleavage at 2 sites, Arg-317 and Arg-366, along 2 possible pathways. In the first pathway, the first cleavage occurs at Arg-317, leading to the formation of the inactive intermediate prethrombin-2. This pathway preferentially occurs on platelets and in the absence of cofactor Va. In the second pathway, the first cleavage occurs at Arg-366, which separates protease domain into 2 chains that remain connected through a disulfide bond and generates the active intermediate meizothrombin. The presence of cofactor Va directs activation along the meizothrombin pathway and greatly accelerates the rate of cleavage at Arg-366, but has a smaller effect on the cleavage of meizothrombin at Arg-317. Meizothrombin accumulates as an intermediate when prothrombinase is assembled on the membrane of red blood cells. As to expression, expressed by the liver and secreted in plasma.

Its subcellular location is the secreted. The protein resides in the extracellular space. It catalyses the reaction Selective cleavage of Arg-|-Gly bonds in fibrinogen to form fibrin and release fibrinopeptides A and B.. Its activity is regulated as follows. Activity is promoted in the presence of negatively charged surfaces, such as polyphosphate and dextran sulfate. Inhibited by SERPINA5. Functionally, thrombin, which cleaves bonds after Arg and Lys, converts fibrinogen to fibrin and activates factors V, VII, VIII, XIII, and, in complex with thrombomodulin, protein C. Functions in blood homeostasis, inflammation and wound healing. Activates coagulation factor XI (F11); activation is promoted by the contact with negatively charged surfaces. Triggers the production of pro-inflammatory cytokines, such as MCP-1/CCL2 and IL8/CXCL8, in endothelial cells. This chain is Prothrombin (F2), found in Bos taurus (Bovine).